Here is a 112-residue protein sequence, read N- to C-terminus: Ribosome-binding factor A (112 aa).

Belongs to the RbfA family. In terms of assembly, monomer. Binds 30S ribosomal subunits, but not 50S ribosomal subunits or 70S ribosomes.

It is found in the cytoplasm. Functionally, one of several proteins that assist in the late maturation steps of the functional core of the 30S ribosomal subunit. Associates with free 30S ribosomal subunits (but not with 30S subunits that are part of 70S ribosomes or polysomes). Required for efficient processing of 16S rRNA. May interact with the 5'-terminal helix region of 16S rRNA. This Mycoplasmopsis pulmonis (strain UAB CTIP) (Mycoplasma pulmonis) protein is Ribosome-binding factor A.